The sequence spans 215 residues: N-(5'-phosphoribosyl)anthranilate isomerase (215 aa).

Belongs to the TrpF family.

It catalyses the reaction N-(5-phospho-beta-D-ribosyl)anthranilate = 1-(2-carboxyphenylamino)-1-deoxy-D-ribulose 5-phosphate. It functions in the pathway amino-acid biosynthesis; L-tryptophan biosynthesis; L-tryptophan from chorismate: step 3/5. This chain is N-(5'-phosphoribosyl)anthranilate isomerase, found in Paramagnetospirillum magneticum (strain ATCC 700264 / AMB-1) (Magnetospirillum magneticum).